The primary structure comprises 380 residues: Cytochrome b (380 aa).

Helical transmembrane passes span 34-54, 78-99, 114-134, and 179-199; these read FGSL…FLAM, WLVR…YLHI, WNIG…GYVL, and FFAF…LHLL. Heme b-binding residues include His-84 and His-98. Heme b contacts are provided by His-183 and His-197. His-202 is an a ubiquinone binding site. Transmembrane regions (helical) follow at residues 227 to 247, 289 to 309, 321 to 341, and 348 to 368; these read YKDT…SMLS, LGGV…PMIH, MTQF…WIGG, and FIEI…IFMP.

It belongs to the cytochrome b family. As to quaternary structure, the cytochrome bc1 complex contains 3 respiratory subunits (MT-CYB, CYC1 and UQCRFS1), 2 core proteins (UQCRC1 and UQCRC2) and probably 6 low-molecular weight proteins. It depends on heme b as a cofactor.

The protein localises to the mitochondrion inner membrane. Functionally, component of the ubiquinol-cytochrome c reductase complex (complex III or cytochrome b-c1 complex) that is part of the mitochondrial respiratory chain. The b-c1 complex mediates electron transfer from ubiquinol to cytochrome c. Contributes to the generation of a proton gradient across the mitochondrial membrane that is then used for ATP synthesis. This chain is Cytochrome b (mt-cyb), found in Ranodon sibiricus (Siberian salamander).